Reading from the N-terminus, the 202-residue chain is MKALTARQQQVYDLIRDHIEQTGMPPTRAEIAQRLGFRSPNAAEEHLKALQRKGVIEIVSGASRGIRLLMEDETGLPLVGQVAAGEPLLAQQHIEGFYQIDPSLFKPGADFLLRVNGMSMRDIGILDGDLLAVHKTQDVRNGQVVVARIEDEVTVKRLKKQGNMVQLLPENCDFQPIVVDLREQSFTIEGLAVGVIRNGDWI.

A DNA-binding region (H-T-H motif) is located at residues 28–48; the sequence is RAEIAQRLGFRSPNAAEEHLK. Active-site for autocatalytic cleavage activity residues include Ser119 and Lys156.

It belongs to the peptidase S24 family. In terms of assembly, homodimer.

It carries out the reaction Hydrolysis of Ala-|-Gly bond in repressor LexA.. In terms of biological role, represses a number of genes involved in the response to DNA damage (SOS response), including recA and lexA. Binds to the 16 bp palindromic sequence 5'-CTGTATATATATACAG-3'. In the presence of single-stranded DNA, RecA interacts with LexA causing an autocatalytic cleavage which disrupts the DNA-binding part of LexA, leading to derepression of the SOS regulon and eventually DNA repair. In Edwardsiella ictaluri (strain 93-146), this protein is LexA repressor.